The following is an 85-amino-acid chain: Large ribosomal subunit protein bL27 (85 aa).

The tract at residues 1 to 22 is disordered; sequence MAHKKGVGSTRNGRDSESKRLG.

Belongs to the bacterial ribosomal protein bL27 family.

This is Large ribosomal subunit protein bL27 from Geobacter metallireducens (strain ATCC 53774 / DSM 7210 / GS-15).